A 255-amino-acid chain; its full sequence is Arginine-binding extracellular protein ArtP (255 aa).

An N-terminal signal peptide occupies residues M1–A19. C20 carries N-palmitoyl cysteine lipidation. C20 carries the S-diacylglycerol cysteine lipid modification.

Belongs to the bacterial solute-binding protein 3 family.

The protein localises to the cell membrane. Its function is as follows. Part of a binding-protein-dependent transport system for arginine. The polypeptide is Arginine-binding extracellular protein ArtP (artP) (Bacillus subtilis (strain 168)).